The primary structure comprises 765 residues: ATP-dependent zinc metalloprotease FtsH (765 aa).

Residues 1 to 27 lie on the Cytoplasmic side of the membrane; it reads MSNTSNFNERVTENAKPPKNVKSIIWK. A helical transmembrane segment spans residues 28–48; it reads TIGIIIVMAIIIGLILFYVLP. The Extracellular portion of the chain corresponds to 49–213; the sequence is RNTIANISNI…NVQLPNQSTA (165 aa). Residues 214–234 form a helical membrane-spanning segment; it reads ILTQFLTSIIPFVILIVIYIV. Residues 235–765 are Cytoplasmic-facing; it reads IARRFSRTMG…EPTASTASSN (531 aa). 314–321 contributes to the ATP binding site; that stretch reads GPPGTGKT. His-536 is a binding site for Zn(2+). Residue Glu-537 is part of the active site. Residues His-540 and Asp-615 each contribute to the Zn(2+) site. A compositionally biased stretch (basic and acidic residues) spans 730-748; it reads KAAAEKEEQAEKAKLDHQS. Positions 730-765 are disordered; the sequence is KAAAEKEEQAEKAKLDHQSDSAQPQEEPTASTASSN. Polar residues predominate over residues 749 to 765; the sequence is DSAQPQEEPTASTASSN.

It in the central section; belongs to the AAA ATPase family. In the C-terminal section; belongs to the peptidase M41 family. As to quaternary structure, homohexamer. The cofactor is Zn(2+).

It localises to the cell membrane. Functionally, acts as a processive, ATP-dependent zinc metallopeptidase for both cytoplasmic and membrane proteins. Plays a role in the quality control of integral membrane proteins. The protein is ATP-dependent zinc metalloprotease FtsH of Mycoplasmoides gallisepticum (strain R(high / passage 156)) (Mycoplasma gallisepticum).